Here is a 264-residue protein sequence, read N- to C-terminus: Thymidylate synthase (264 aa).

DUMP contacts are provided by residues Arg21 and Arg126–Arg127. Residue Cys146 is the Nucleophile of the active site. DUMP contacts are provided by residues Arg166–Asp169, Asn177, and His207–Tyr209. Position 169 (Asp169) interacts with (6R)-5,10-methylene-5,6,7,8-tetrahydrofolate. Residue Ala263 participates in (6R)-5,10-methylene-5,6,7,8-tetrahydrofolate binding.

Belongs to the thymidylate synthase family. Bacterial-type ThyA subfamily. Homodimer.

The protein resides in the cytoplasm. It carries out the reaction dUMP + (6R)-5,10-methylene-5,6,7,8-tetrahydrofolate = 7,8-dihydrofolate + dTMP. Its pathway is pyrimidine metabolism; dTTP biosynthesis. Functionally, catalyzes the reductive methylation of 2'-deoxyuridine-5'-monophosphate (dUMP) to 2'-deoxythymidine-5'-monophosphate (dTMP) while utilizing 5,10-methylenetetrahydrofolate (mTHF) as the methyl donor and reductant in the reaction, yielding dihydrofolate (DHF) as a by-product. This enzymatic reaction provides an intracellular de novo source of dTMP, an essential precursor for DNA biosynthesis. In Nitrobacter hamburgensis (strain DSM 10229 / NCIMB 13809 / X14), this protein is Thymidylate synthase.